The primary structure comprises 227 residues: Trypsin (227 aa).

The 223-residue stretch at 1 to 223 (IVGGEDANVQ…YYDVLMEQIN (223 aa)) folds into the Peptidase S1 domain. Cysteine 27 and cysteine 43 form a disulfide bridge. Residues histidine 42 and aspartate 88 each act as charge relay system in the active site. Cystine bridges form between cysteine 150–cysteine 164 and cysteine 175–cysteine 199. Catalysis depends on serine 179, which acts as the Charge relay system.

It belongs to the peptidase S1 family.

The catalysed reaction is Preferential cleavage: Arg-|-Xaa, Lys-|-Xaa.. The chain is Trypsin from Saccharopolyspora erythraea (Streptomyces erythraeus).